Consider the following 259-residue polypeptide: MSAGPLQAAPKKNYGALIGAGPAVGGAAFNRTLSEVASYERSRRDHATPDYRIKIVVVGDGATGKTSLLMSYTQGQFPEDYVPTIFENYVTNIEGPRGKVIELALWDTAGQEEYSRLRPLSYGDVDIVMVCYAADNRTSLTNAEELWFPEVRHFCPHAPMMLVGLKSDLYSLDALDRLVDPTDAELVARKMGAFVHLQCSAKTRQCLEDVFNTAIHTALYDELRAPPQRGVKGMFKKKQQRDPQAQSYKRVRKHRCVVL.

59–66 is a binding site for GTP; sequence GDGATGKT. Residues 81–89 carry the Effector region motif; the sequence is YVPTIFENY. Residues 107 to 111 and 165 to 168 contribute to the GTP site; these read DTAGQ and LKSD. The residue at position 256 (Cys256) is a Cysteine methyl ester. Cys256 is lipidated: S-geranylgeranyl cysteine. Positions 257-259 are cleaved as a propeptide — removed in mature form; it reads VVL.

This sequence belongs to the small GTPase superfamily. Rho family.

The protein localises to the cell membrane. The chain is GTP-binding protein RHO4 (RHO4) from Eremothecium gossypii (strain ATCC 10895 / CBS 109.51 / FGSC 9923 / NRRL Y-1056) (Yeast).